The primary structure comprises 196 residues: Imidazoleglycerol-phosphate dehydratase (196 aa).

This sequence belongs to the imidazoleglycerol-phosphate dehydratase family.

The protein localises to the cytoplasm. It carries out the reaction D-erythro-1-(imidazol-4-yl)glycerol 3-phosphate = 3-(imidazol-4-yl)-2-oxopropyl phosphate + H2O. Its pathway is amino-acid biosynthesis; L-histidine biosynthesis; L-histidine from 5-phospho-alpha-D-ribose 1-diphosphate: step 6/9. This is Imidazoleglycerol-phosphate dehydratase from Clostridium botulinum (strain Okra / Type B1).